The chain runs to 248 residues: Proteasome subunit alpha type-7 (248 aa).

The O-linked (GlcNAc) serine glycan is linked to serine 130. Phosphotyrosine is present on tyrosine 153. At lysine 227 the chain carries N6-acetyllysine.

The protein belongs to the peptidase T1A family. In terms of assembly, the 26S proteasome consists of a 20S proteasome core and two 19S regulatory subunits. The 20S proteasome core is a barrel-shaped complex made of 28 subunits that are arranged in four stacked rings. The two outer rings are each formed by seven alpha subunits, and the two inner rings are formed by seven beta subunits. The proteolytic activity is exerted by three beta-subunits PSMB5, PSMB6 and PSMB7. PSMA7 interacts directly with the PSMG1-PSMG2 heterodimer which promotes 20S proteasome assembly. Interacts with HIF1A. Interacts with RAB7A. Interacts with PRKN. Interacts with ABL1 and ABL2. Interacts with EMAP2. Interacts with MAVS.

Its subcellular location is the cytoplasm. The protein resides in the nucleus. Component of the 20S core proteasome complex involved in the proteolytic degradation of most intracellular proteins. This complex plays numerous essential roles within the cell by associating with different regulatory particles. Associated with two 19S regulatory particles, forms the 26S proteasome and thus participates in the ATP-dependent degradation of ubiquitinated proteins. The 26S proteasome plays a key role in the maintenance of protein homeostasis by removing misfolded or damaged proteins that could impair cellular functions, and by removing proteins whose functions are no longer required. Associated with the PA200 or PA28, the 20S proteasome mediates ubiquitin-independent protein degradation. This type of proteolysis is required in several pathways including spermatogenesis (20S-PA200 complex) or generation of a subset of MHC class I-presented antigenic peptides (20S-PA28 complex). Inhibits the transactivation function of HIF-1A under both normoxic and hypoxia-mimicking conditions. The interaction with EMAP2 increases the proteasome-mediated HIF-1A degradation under the hypoxic conditions. Plays a role in hepatitis C virus internal ribosome entry site-mediated translation. Mediates nuclear translocation of the androgen receptor (AR) and thereby enhances androgen-mediated transactivation. Promotes MAVS degradation and thereby negatively regulates MAVS-mediated innate immune response. The chain is Proteasome subunit alpha type-7 (PSMA7) from Bos taurus (Bovine).